A 265-amino-acid polypeptide reads, in one-letter code: MEMO1 family protein Mbar_A1422 (265 aa).

This sequence belongs to the MEMO1 family.

This chain is MEMO1 family protein Mbar_A1422, found in Methanosarcina barkeri (strain Fusaro / DSM 804).